Consider the following 288-residue polypeptide: Acetyl-coenzyme A carboxylase carboxyl transferase subunit beta (288 aa).

The 257-residue stretch at 32-288 (MWAKCPSCKR…LRLHSLEGWR (257 aa)) folds into the CoA carboxyltransferase N-terminal domain. Zn(2+)-binding residues include Cys-36, Cys-39, Cys-54, and Cys-57. The segment at 36–57 (CPSCKRTLYTKEMGAEKICPHC) adopts a C4-type zinc-finger fold.

This sequence belongs to the AccD/PCCB family. As to quaternary structure, acetyl-CoA carboxylase is a heterohexamer composed of biotin carboxyl carrier protein (AccB), biotin carboxylase (AccC) and two subunits each of ACCase subunit alpha (AccA) and ACCase subunit beta (AccD). Zn(2+) is required as a cofactor.

The protein resides in the cytoplasm. It carries out the reaction N(6)-carboxybiotinyl-L-lysyl-[protein] + acetyl-CoA = N(6)-biotinyl-L-lysyl-[protein] + malonyl-CoA. It functions in the pathway lipid metabolism; malonyl-CoA biosynthesis; malonyl-CoA from acetyl-CoA: step 1/1. Functionally, component of the acetyl coenzyme A carboxylase (ACC) complex. Biotin carboxylase (BC) catalyzes the carboxylation of biotin on its carrier protein (BCCP) and then the CO(2) group is transferred by the transcarboxylase to acetyl-CoA to form malonyl-CoA. This is Acetyl-coenzyme A carboxylase carboxyl transferase subunit beta from Enterococcus faecalis (strain ATCC 700802 / V583).